The following is a 380-amino-acid chain: Peroxisomal membrane protein PEX13 (380 aa).

Positions 1–30 (MSDSSAPDLPSKPSSLNAGQSSSLQTTNTG) are disordered. Topologically, residues 1–230 (MSDSSAPDLP…NKNTNKLSLK (230 aa)) are lumenal. Residues 12–30 (KPSSLNAGQSSSLQTTNTG) are compositionally biased toward polar residues. A helical transmembrane segment spans residues 231 to 251 (PLLLFLAAVVGFPYLLKKLIA). Over 252–380 (HLAETSQMNG…DSTEFQKMKT (129 aa)) the chain is Cytoplasmic. Residues 277–344 (TKLEFARALY…PYNYVEIIER (68 aa)) form the SH3 domain.

Belongs to the peroxin-13 family. Interacts (via SH3 domain) with PEX14 (via SH3-binding motif); forming the PEX13-PEX14 docking complex.

The protein resides in the peroxisome membrane. Its function is as follows. Component of the PEX13-PEX14 docking complex, a translocon channel that specifically mediates the import of peroxisomal cargo proteins bound to PEX5 receptor. The PEX13-PEX14 docking complex forms a large import pore which can be opened to a diameter of about 9 nm. Mechanistically, PEX5 receptor along with cargo proteins associates with the PEX14 subunit of the PEX13-PEX14 docking complex in the cytosol, leading to the insertion of the receptor into the organelle membrane with the concomitant translocation of the cargo into the peroxisome matrix. The protein is Peroxisomal membrane protein PEX13 (PEX13) of Komagataella pastoris (Yeast).